The chain runs to 148 residues: Ubiquitin-like protein 4A (148 aa).

A Ubiquitin-like domain is found at 1–76 (MQLTVKALKG…LNLMVKDQVA (76 aa)).

Component of the bag6/bat3 complex.

Its subcellular location is the cytoplasm. It is found in the cytosol. The protein resides in the nucleus. In terms of biological role, as part of a cytosolic protein quality control complex, the bag6/bat3 complex, maintains misfolded and hydrophobic patches-containing proteins in a soluble state and participates in their proper delivery to the endoplasmic reticulum or alternatively can promote their sorting to the proteasome where they undergo degradation. The bag6/bat3 complex is involved in the post-translational delivery of tail-anchored/type II transmembrane proteins to the endoplasmic reticulum membrane. Similarly, the bag6/bat3 complex also functions as a sorting platform for proteins of the secretory pathway that are mislocalized to the cytosol either delivering them to the proteasome for degradation or to the endoplasmic reticulum. The bag6/bat3 complex also plays a role in the endoplasmic reticulum-associated degradation (ERAD), a quality control mechanism that eliminates unwanted proteins of the endoplasmic reticulum through their retrotranslocation to the cytosol and their targeting to the proteasome. It maintains these retrotranslocated proteins in an unfolded yet soluble state condition in the cytosol to ensure their proper delivery to the proteasome. This is Ubiquitin-like protein 4A (ubl4a) from Xenopus laevis (African clawed frog).